The chain runs to 503 residues: DnaJ homolog subfamily C member 3 (503 aa).

An N-terminal signal peptide occupies residues 1–31 (MVSAAASAGRLGSALPFLLVLLDLQYQGAEC). 9 TPR repeats span residues 37 to 70 (VEKQLEMGKKLLAAGQLADALSHFHAAIEGDSDN), 71 to 104 (YIAYYRRATVYLAMGKSKAAIRDLSKVVELKQDF), 105 to 137 (TSRLQRGHLLLKQGKFDEAEDDFKNVLKSNPSN), 153 to 186 (LQRLYSQALSAYRQEDYEAAIPLLDEILAVCVWD), 187 to 220 (AELRELRAECYIKEGEPSKAISDLKAAAKLKSDN), 221 to 254 (TEAFYKISRIYYQLGDHELSLSEVRECLKLDQDH), 267 to 300 (LNKQIESAEEFIREGRYEDAISKYDSVMKTEPDV), 305 to 338 (TRAKERICHCLSKNQQATEAITVCTQVLQLEPTN), and 339 to 372 (VNALKDRAEAYLLEDLYEEAIKDYETAQANSEND). C247 and C257 are joined by a disulfide. Cysteines 312 and 328 form a disulfide. Residues 374 to 392 (QIREGLERAQRMLKQSQKR) form a flexible linker region. A J domain is found at 393–461 (DYYKILGVKR…EMRRKFDAGE (69 aa)).

It localises to the endoplasmic reticulum. Functionally, may be involved in the unfolded protein response (UPR) during ER stress. The polypeptide is DnaJ homolog subfamily C member 3 (DNAJC3) (Gallus gallus (Chicken)).